We begin with the raw amino-acid sequence, 718 residues long: Phenylalanine--tRNA ligase beta subunit (718 aa).

The 115-residue stretch at 39-153 folds into the tRNA-binding domain; that stretch reads LNEISGIKFG…IFDLESNPLK (115 aa). The region spanning 386–460 is the B5 domain; the sequence is SKKTFLDLNY…RFYGLEKLKD (75 aa). 3 residues coordinate Mg(2+): D438, D444, and D448.

It belongs to the phenylalanyl-tRNA synthetase beta subunit family. Type 1 subfamily. As to quaternary structure, tetramer of two alpha and two beta subunits. Mg(2+) serves as cofactor.

It localises to the cytoplasm. It catalyses the reaction tRNA(Phe) + L-phenylalanine + ATP = L-phenylalanyl-tRNA(Phe) + AMP + diphosphate + H(+). The sequence is that of Phenylalanine--tRNA ligase beta subunit from Mesomycoplasma hyopneumoniae (strain 232) (Mycoplasma hyopneumoniae).